Consider the following 210-residue polypeptide: Small ribosomal subunit protein uS4 (210 aa).

The 63-residue stretch at 99-161 (RRLDSVIYRM…SKNNATILSA (63 aa)) folds into the S4 RNA-binding domain.

It belongs to the universal ribosomal protein uS4 family. Part of the 30S ribosomal subunit. Contacts protein S5. The interaction surface between S4 and S5 is involved in control of translational fidelity.

In terms of biological role, one of the primary rRNA binding proteins, it binds directly to 16S rRNA where it nucleates assembly of the body of the 30S subunit. Functionally, with S5 and S12 plays an important role in translational accuracy. The protein is Small ribosomal subunit protein uS4 of Solibacter usitatus (strain Ellin6076).